The primary structure comprises 179 residues: Cell division protein ZapC (179 aa).

Belongs to the ZapC family. As to quaternary structure, interacts directly with FtsZ.

The protein localises to the cytoplasm. In terms of biological role, contributes to the efficiency of the cell division process by stabilizing the polymeric form of the cell division protein FtsZ. Acts by promoting interactions between FtsZ protofilaments and suppressing the GTPase activity of FtsZ. This chain is Cell division protein ZapC, found in Tolumonas auensis (strain DSM 9187 / NBRC 110442 / TA 4).